Here is a 96-residue protein sequence, read N- to C-terminus: Muconolactone Delta-isomerase (96 aa).

Belongs to the muconolactone Delta-isomerase family. As to quaternary structure, homodecamer.

The enzyme catalyses (S)-muconolactone = (4,5-dihydro-5-oxofuran-2-yl)-acetate. It participates in aromatic compound metabolism; beta-ketoadipate pathway; 5-oxo-4,5-dihydro-2-furylacetate from catechol: step 3/3. The polypeptide is Muconolactone Delta-isomerase (catC) (Pseudomonas putida (Arthrobacter siderocapsulatus)).